The sequence spans 349 residues: MASDDRPLALTLGDPSGIGPEIALAAWQLRGERGVPPFQLIGDPEFLEATAYRLGLSVPVAEVEPDDACEVFPRALPVLPLPSGAKVIATPGAPDSANAGAIVESITAAVDLVRSGAASAVVTNPIAKFVLTRVGFAHPGHTEFLAALAAREGREPPLPVMMIWSDTLAVVPVTIHVALRRVPELLTQDLVERTARIVHADLRARFGLEHPRLVLSGLNPHAGESGTMGTEDRDVLAPAVAVLRSEGIDIRGPLPADTLFHERARATYDVALTPTHDQALIPVKTLAFDEGVNVTLGLPFVRTSPDHGTAFDIAGKGIAKPDSLIAALRLAHRLAHRPADTVLPFPVRA.

Residues histidine 141 and threonine 142 each contribute to the substrate site. A divalent metal cation contacts are provided by histidine 176, histidine 221, and histidine 276. Residues lysine 284, asparagine 293, and arginine 302 each contribute to the substrate site.

This sequence belongs to the PdxA family. As to quaternary structure, homodimer. It depends on Zn(2+) as a cofactor. The cofactor is Mg(2+). Co(2+) serves as cofactor.

Its subcellular location is the cytoplasm. The catalysed reaction is 4-(phosphooxy)-L-threonine + NAD(+) = 3-amino-2-oxopropyl phosphate + CO2 + NADH. Its pathway is cofactor biosynthesis; pyridoxine 5'-phosphate biosynthesis; pyridoxine 5'-phosphate from D-erythrose 4-phosphate: step 4/5. In terms of biological role, catalyzes the NAD(P)-dependent oxidation of 4-(phosphooxy)-L-threonine (HTP) into 2-amino-3-oxo-4-(phosphooxy)butyric acid which spontaneously decarboxylates to form 3-amino-2-oxopropyl phosphate (AHAP). This chain is 4-hydroxythreonine-4-phosphate dehydrogenase, found in Methylorubrum extorquens (strain PA1) (Methylobacterium extorquens).